The following is a 349-amino-acid chain: N-acetyltaurine hydrolase (349 aa).

His-26, His-28, Glu-169, His-201, His-230, and Asp-298 together coordinate a divalent metal cation.

This sequence belongs to the metallo-dependent hydrolases superfamily. Phosphotriesterase family. A divalent metal cation is required as a cofactor. Expressed primarily in proximal tubules of the kidney.

It is found in the cytoplasm. Its subcellular location is the cytosol. The enzyme catalyses N-acetyltaurine + H2O = taurine + acetate. It catalyses the reaction N-propanoyltaurine + H2O = propanoate + taurine. The catalysed reaction is N-acetyl-L-methionine + H2O = L-methionine + acetate. It carries out the reaction N-acetyl-L-isoleucine + H2O = L-isoleucine + acetate. The enzyme catalyses N-acetyl-L-leucine + H2O = L-leucine + acetate. It catalyses the reaction N-acetyl-L-valine + H2O = L-valine + acetate. N-acetyltaurine hydrolase that regulates feeding by catalyzing the hydrolysis of N-acetyltaurine into taurine and acetate. N-acetyltaurine has anorexigenic and anti-obesity effects that are dependent on GFRAL receptor and GDF15. PTER also acts on other N-acetyl amino acids (Met, Ile, Leu, Val) and N-propionyltaurine, but at lower rates. Binds resiniferotoxin, a vanilloid that desensitizes nociceptive neurons. The chain is N-acetyltaurine hydrolase from Rattus norvegicus (Rat).